The sequence spans 451 residues: MVSFESSFERGTDFLNRNFKKCLFACISIFIFALLALSFLSLLQPDTVQRLYQCAVPSMIYVPPMINEAISIQHEEFNNRRRRLSAALREDKLDALIMEPTVSMDYFANITTGSWGLSERPFLGIIFSDDEPYPGDVASRIYFLVPKFELPRAKELVGKNIDAKYITWDEDENPYQVLYDRLGPLKLMIDGTVRNFIAQGLQYAGFTTFGVSPRVASLREIKSPAEVDIMSRVNIATVAAIRSVQPCIKPGITEKELAEVINMLFVYGGLPVQESPIVLFGERAAMPHGGPSNRRLKKSEFVLMDVGTTLFGYHSDCTRTVLPHGQKMTERMEKLWNLVYDAQTAGIQMLSHLSNTSCAEVDLAARKVIKDAGYGEYFIHRLGHGLGLEEHEQTYLNPANKGTPVQKGNVFTVEPGIYIPDEIGIRIEDAVLASDVPILLTNFRAKSPYEP.

Mn(2+) contacts are provided by aspartate 305, aspartate 316, histidine 384, glutamate 414, and glutamate 428.

This sequence belongs to the peptidase M24B family. Mn(2+) is required as a cofactor.

This is an uncharacterized protein from Schizosaccharomyces pombe (strain 972 / ATCC 24843) (Fission yeast).